Here is a 248-residue protein sequence, read N- to C-terminus: Non-specific acid phosphatase (248 aa).

The first 20 residues, 1-20, serve as a signal peptide directing secretion; sequence MKKLLAVFCAGAFVSTSVFA.

The protein belongs to the class A bacterial acid phosphatase family.

The protein localises to the periplasm. The enzyme catalyses a phosphate monoester + H2O = an alcohol + phosphate. The protein is Non-specific acid phosphatase (phoN) of Providencia stuartii.